Here is a 318-residue protein sequence, read N- to C-terminus: NADH-ubiquinone oxidoreductase chain 1 (318 aa).

Transmembrane regions (helical) follow at residues 5 to 25 (IISS…LTLI), 69 to 89 (SIFL…ILWI), 102 to 122 (LGLM…LTSG), 148 to 168 (LGLM…KLFI), 174 to 194 (IWLL…TLAE), 215 to 235 (VEFS…NILF), 253 to 273 (LYFS…FLWV), and 293 to 313 (FLPI…FFGV).

It belongs to the complex I subunit 1 family.

The protein resides in the mitochondrion inner membrane. It catalyses the reaction a ubiquinone + NADH + 5 H(+)(in) = a ubiquinol + NAD(+) + 4 H(+)(out). Its function is as follows. Core subunit of the mitochondrial membrane respiratory chain NADH dehydrogenase (Complex I) that is believed to belong to the minimal assembly required for catalysis. Complex I functions in the transfer of electrons from NADH to the respiratory chain. The immediate electron acceptor for the enzyme is believed to be ubiquinone. The chain is NADH-ubiquinone oxidoreductase chain 1 (MT-ND1) from Myxine glutinosa (Atlantic hagfish).